A 399-amino-acid chain; its full sequence is 1-deoxy-D-xylulose 5-phosphate reductoisomerase (399 aa).

Thr-13, Gly-14, Ser-15, Ile-16, and Asn-127 together coordinate NADPH. Position 128 (Lys-128) interacts with 1-deoxy-D-xylulose 5-phosphate. Residue Glu-129 participates in NADPH binding. A Mn(2+)-binding site is contributed by Asp-153. 1-deoxy-D-xylulose 5-phosphate contacts are provided by Ser-154, Glu-155, Ser-187, and His-210. Glu-155 provides a ligand contact to Mn(2+). Gly-216 is an NADPH binding site. 1-deoxy-D-xylulose 5-phosphate-binding residues include Ser-223, Asn-228, Lys-229, and Glu-232. Residue Glu-232 participates in Mn(2+) binding.

The protein belongs to the DXR family. It depends on Mg(2+) as a cofactor. Mn(2+) is required as a cofactor.

The enzyme catalyses 2-C-methyl-D-erythritol 4-phosphate + NADP(+) = 1-deoxy-D-xylulose 5-phosphate + NADPH + H(+). The protein operates within isoprenoid biosynthesis; isopentenyl diphosphate biosynthesis via DXP pathway; isopentenyl diphosphate from 1-deoxy-D-xylulose 5-phosphate: step 1/6. Its function is as follows. Catalyzes the NADPH-dependent rearrangement and reduction of 1-deoxy-D-xylulose-5-phosphate (DXP) to 2-C-methyl-D-erythritol 4-phosphate (MEP). This chain is 1-deoxy-D-xylulose 5-phosphate reductoisomerase, found in Bordetella pertussis (strain Tohama I / ATCC BAA-589 / NCTC 13251).